The primary structure comprises 1051 residues: SWI/SNF-related matrix-associated actin-dependent regulator of chromatin subfamily A member 5 (1051 aa).

A compositionally biased stretch (pro residues) spans 1-15; it reads MSSAVEPPPPPPPES. A disordered region spans residues 1 to 81; it reads MSSAVEPPPP…IQEPDPTYEE (81 aa). Serine 2 carries the post-translational modification N-acetylserine. A compositionally biased stretch (gly residues) spans 24-38; that stretch reads GAGGSSSGNKGGPEG. Over residues 39–53 the composition is skewed to low complexity; it reads GAAPAAPCAAGSGPA. Position 55 is a phosphothreonine (threonine 55). Serine 65 bears the Phosphoserine mark. Residues 68 to 81 show a composition bias toward basic and acidic residues; it reads KQKEIQEPDPTYEE. Lysine 82 participates in a covalent cross-link: Glycyl lysine isopeptide (Lys-Gly) (interchain with G-Cter in SUMO2). At threonine 112 the chain carries Phosphothreonine. A phosphoserine mark is found at serine 115, serine 136, and serine 170. Positions 191–356 constitute a Helicase ATP-binding domain; it reads ISLYENGING…WSLLNFLLPD (166 aa). 204–211 lines the ATP pocket; sequence DEMGLGKT. A DEAH box motif is present at residues 307–310; it reads DEAH. Lysine 439 bears the N6-acetyllysine mark. Residues 486 to 637 form the Helicase C-terminal domain; that stretch reads VLDKLLPKLK…SIVIQQGRLV (152 aa). Glycyl lysine isopeptide (Lys-Gly) (interchain with G-Cter in SUMO2) cross-links involve residues lysine 643, lysine 646, lysine 693, lysine 721, and lysine 734. Residue serine 754 is modified to Phosphoserine. 2 SANT domains span residues 839–891 and 942–1006; these read QGFT…ERCN and KGKN…LITL. A Glycyl lysine isopeptide (Lys-Gly) (interchain with G-Cter in SUMO2) cross-link involves residue lysine 965. Residues 1014–1051 form a disordered region; that stretch reads LEEKEKAEKKKRGPKPSTQKRKMDGAPDGRGRKKKLKL. A compositionally biased stretch (basic residues) spans 1022 to 1033; the sequence is KKKRGPKPSTQK. Over residues 1034–1043 the composition is skewed to basic and acidic residues; that stretch reads RKMDGAPDGR.

Belongs to the SNF2/RAD54 helicase family. ISWI subfamily. As to quaternary structure, component of the ACF-5 ISWI chromatin-remodeling complex (also called the ACF/WCRF complex) at least composed of SMARCA5/SNF2H and BAZ1A/ACF1, which regulates the spacing of histone octamers on the DNA template to facilitate access to DNA. Within the complex interacts with BAZ1A/ACF1; the interaction is direct and is required to slide nucleosomes from end to center positions on a DNA template in an ATP-dependent manner. Component of the CHRAC ISWI chromatin-remodeling complex at least composed of SMARCA5/SNF2H, BAZ1A/ACF1, CHRAC1 and POLE3; the complex preferentially binds DNA through the CHRAC1-POLE3 heterodimer and possesses ATP-dependent nucleosome-remodeling activity. Within the complex interacts with BAZ1A/ACF1; the interaction is direct and promotes the interaction with the POLE3-CHRAC1 heterodimer. Within the complex interacts with the POLE3-CHRAC1 heterodimer; the interaction is direct and enhances nucleosome sliding activity by the SMARCA5/SNF2H and BAZ1A/ACF1 interaction. Neither POLE3 nor CHRAC1 enhances nucleosome sliding activity of the ACF-5 ISWI chromatin remodeling complex. Component of the WICH-5 ISWI chromatin-remodeling complex (also called the WICH complex) at least composed of SMARCA5/SNF2H and BAZ1B/WSTF, which regulates the spacing of histone octamers on the DNA template to facilitate access to DNA. Within the complex interacts with BAZ1B/WSTF. Component of the NoRC-5 ISWI chromatin-remodeling complex (also called the NoRC chromatin-remodeling complex) at least composed of SMARCA5/SNF2H and BAZ2A/TIP5; the complex suppresses rDNA transcription by a combination of nucleosome remodeling, histone deacetylation, and DNA methylation. Within the complex interacts with BAZ2A/TIP5. Within the complex interacts with HDAC1. Component of the BRF-5 ISWI chromatin-remodeling complex at least composed of SMARCA5/SNF2H and BAZ2B. Within the complex interacts with BAZ2B. Component of the NURF-5 ISWI chromatin-remodeling complex at least composed of SMARCA5/SNF2H and BPTF. Within the complex interacts with BPFT. Component of the CERF-5 ISWI chromatin-remodeling complex at least composed of SMARCA5/SNF2H and CECR2. LUZP1 is detected as part of the CERF-5 complex in embryonic stem cells where it is involved in complex stabilization but is not detected in the complex in the testis. Component of the RSF-5 ISWI chromatin-remodeling complex (also called the RSF complex) at least composed of SMARCA5/SNF2H and RSF1. Within the complex interacts with RSF1. Interacts with the cohesin complex component RAD21; the interaction is direct. Interacts with the NuRD complex components HDAC2, RBBP4 and CHD4; the interactions are direct. Interacts with PCNA. Component of the B-WICH complex, at least composed of SMARCA5/SNF2H, BAZ1B/WSTF, SF3B1, DEK, MYO1C, ERCC6, MYBBP1A and DDX21 which positively regulates RNA polymerase III transcription. Interacts with MYO1C. Interacts with BEND3. Interacts with SIRT6; promoting recruitment to DNA damage sites. Ubiquitously expressed.

It is found in the nucleus. Its subcellular location is the chromosome. The catalysed reaction is ATP + H2O = ADP + phosphate + H(+). Functionally, ATPase that possesses intrinsic ATP-dependent nucleosome-remodeling activity. Catalytic subunit of ISWI chromatin-remodeling complexes, which form ordered nucleosome arrays on chromatin and facilitate access to DNA during DNA-templated processes such as DNA replication, transcription, and repair; this may require intact histone H4 tails. Within the ISWI chromatin-remodeling complexes, slides edge- and center-positioned histone octamers away from their original location on the DNA template. Catalytic activity and histone octamer sliding propensity is regulated and determined by components of the ISWI chromatin-remodeling complexes. The BAZ1A/ACF1-, BAZ1B/WSTF-, BAZ2A/TIP5- and BAZ2B-containing ISWI chromatin-remodeling complexes regulate the spacing of nucleosomes along the chromatin and have the ability to slide mononucleosomes to the center of a DNA template in an ATP-dependent manner. The CECR2- and RSF1-containing ISWI chromatin-remodeling complexes do not have the ability to slide mononucleosomes to the center of a DNA template. Binds to core histones together with RSF1, and is required for the assembly of regular nucleosome arrays by the RSF-5 ISWI chromatin-remodeling complex. Involved in DNA replication and together with BAZ1A/ACF1 is required for replication of pericentric heterochromatin in S-phase. Probably plays a role in repression of RNA polymerase I dependent transcription of the rDNA locus, through the recruitment of the SIN3/HDAC1 corepressor complex to the rDNA promoter. The WICH-5 ISWI chromatin-remodeling complex regulates the transcription of various genes, has a role in RNA polymerase I and RNA polymerase III transcription, mediates the histone H2AX phosphorylation at 'Tyr-142', and is involved in the maintenance of chromatin structures during DNA replication processes. Essential component of the NoRC-5 ISWI chromatin-remodeling complex, a complex that mediates silencing of a fraction of rDNA by recruiting histone-modifying enzymes and DNA methyltransferases, leading to heterochromatin formation and transcriptional silencing. Required for embryonic development and differentiation, and the proliferation of early blastocyst-derived stem cells. The chain is SWI/SNF-related matrix-associated actin-dependent regulator of chromatin subfamily A member 5 (Smarca5) from Mus musculus (Mouse).